A 260-amino-acid chain; its full sequence is Glutamate racemase (260 aa).

Substrate contacts are provided by residues 14 to 15 (DS) and 46 to 47 (YG). Catalysis depends on Cys77, which acts as the Proton donor/acceptor. Position 78–79 (78–79 (NT)) interacts with substrate. Cys188 acts as the Proton donor/acceptor in catalysis. Substrate is bound at residue 189 to 190 (TH).

It belongs to the aspartate/glutamate racemases family.

The enzyme catalyses L-glutamate = D-glutamate. Its pathway is cell wall biogenesis; peptidoglycan biosynthesis. Provides the (R)-glutamate required for cell wall biosynthesis. The protein is Glutamate racemase of Clostridium perfringens (strain ATCC 13124 / DSM 756 / JCM 1290 / NCIMB 6125 / NCTC 8237 / Type A).